The sequence spans 152 residues: Nucleoside diphosphate kinase (152 aa).

The ATP site is built by K9, F57, R85, T91, R102, and N112. The Pros-phosphohistidine intermediate role is filled by H115.

The protein belongs to the NDK family. In terms of assembly, homotetramer. Mg(2+) is required as a cofactor.

The protein resides in the cytoplasm. It catalyses the reaction a 2'-deoxyribonucleoside 5'-diphosphate + ATP = a 2'-deoxyribonucleoside 5'-triphosphate + ADP. The enzyme catalyses a ribonucleoside 5'-diphosphate + ATP = a ribonucleoside 5'-triphosphate + ADP. In terms of biological role, major role in the synthesis of nucleoside triphosphates other than ATP. The ATP gamma phosphate is transferred to the NDP beta phosphate via a ping-pong mechanism, using a phosphorylated active-site intermediate. The polypeptide is Nucleoside diphosphate kinase (Rhodopirellula baltica (strain DSM 10527 / NCIMB 13988 / SH1)).